We begin with the raw amino-acid sequence, 499 residues long: ATP synthase subunit alpha (499 aa).

169 to 176 (GDRGTGKT) contacts ATP.

The protein belongs to the ATPase alpha/beta chains family. F-type ATPases have 2 components, CF(1) - the catalytic core - and CF(0) - the membrane proton channel. CF(1) has five subunits: alpha(3), beta(3), gamma(1), delta(1), epsilon(1). CF(0) has three main subunits: a(1), b(2) and c(9-12). The alpha and beta chains form an alternating ring which encloses part of the gamma chain. CF(1) is attached to CF(0) by a central stalk formed by the gamma and epsilon chains, while a peripheral stalk is formed by the delta and b chains.

The protein resides in the cell inner membrane. It carries out the reaction ATP + H2O + 4 H(+)(in) = ADP + phosphate + 5 H(+)(out). Produces ATP from ADP in the presence of a proton gradient across the membrane. The alpha chain is a regulatory subunit. This Brachyspira hyodysenteriae (strain ATCC 49526 / WA1) protein is ATP synthase subunit alpha.